Here is a 227-residue protein sequence, read N- to C-terminus: MICOS complex subunit MIC19 (227 aa).

Gly2 carries the N-myristoyl glycine lipid modification. Ser29 is modified (phosphoserine). A disordered region spans residues 34 to 60 (DRMKETSPSGPKSQRYSGTYGASVSDE). A compositionally biased stretch (polar residues) spans 39 to 55 (TSPSGPKSQRYSGTYGA). Phosphotyrosine is present on Tyr49. Residues Ser50, Ser56, and Ser58 each carry the phosphoserine modification. Lys142 is modified (N6-acetyllysine). Positions 180 to 222 (HPVCADLQAQILQCYRQNTQQTLSCSALASQYMRCVNQAKQST) constitute a CHCH domain. 2 consecutive short sequence motifs (cx9C motif) follow at residues 183 to 193 (CADLQAQILQC) and 204 to 214 (CSALASQYMRC). 2 disulfides stabilise this stretch: Cys183-Cys214 and Cys193-Cys204.

It belongs to the MICOS complex subunit Mic19 family. Metazoan Mic19 subfamily. Component of the mitochondrial contact site and cristae organizing system (MICOS) complex, composed of at least MICOS10/MIC10, CHCHD3/MIC19, CHCHD6/MIC25, APOOL/MIC27, IMMT/MIC60, APOO/MIC23/MIC26 and MICOS13/MIC13. This complex was also known under the names MINOS or MitOS complex. The MICOS complex associates with mitochondrial outer membrane proteins SAMM50, MTX1 and MTX2 (together described as components of the mitochondrial outer membrane sorting assembly machinery (SAM) complex) and DNAJC11, mitochondrial inner membrane protein TMEM11 and with HSPA9. The MICOS and SAM complexes together with DNAJC11 are part of a large protein complex spanning both membranes termed the mitochondrial intermembrane space bridging (MIB) complex. Interacts with HSPA1A/HSPA1B and OPA1, preferentially with the soluble OPA1 form. Interacts with IMMT/MIC60.

Its subcellular location is the mitochondrion inner membrane. It is found in the cytoplasm. The protein resides in the nucleus. It localises to the mitochondrion. Its function is as follows. Component of the MICOS complex, a large protein complex of the mitochondrial inner membrane that plays crucial roles in the maintenance of crista junctions, inner membrane architecture, and formation of contact sites to the outer membrane. Has also been shown to function as a transcription factor which binds to the BAG1 promoter and represses BAG1 transcription. Plays an important role in the maintenance of the MICOS complex stability and the mitochondrial cristae morphology. In Bos taurus (Bovine), this protein is MICOS complex subunit MIC19 (CHCHD3).